The sequence spans 299 residues: 4-hydroxybenzoate octaprenyltransferase (299 aa).

The next 7 membrane-spanning stretches (helical) occupy residues 31-51 (IGIYLVLWPTLWSLWIAADGL), 54-74 (WDVLVIFVLGVVLMRSAGCVI), 105-125 (VLFFVALLVIAFILVLFTNPL), 148-168 (QLPQIVLGAAFAWSIPMAFAA), 177-197 (IWVLYTAVVLWTVAYDTFYAM), 241-261 (FGLGFSFKVSLLVAGGLFAYQ), and 277-297 (FLHNNWVGLVVFLGILVDKLI).

The protein belongs to the UbiA prenyltransferase family. Mg(2+) serves as cofactor.

The protein resides in the cell inner membrane. It carries out the reaction all-trans-octaprenyl diphosphate + 4-hydroxybenzoate = 4-hydroxy-3-(all-trans-octaprenyl)benzoate + diphosphate. It participates in cofactor biosynthesis; ubiquinone biosynthesis. In terms of biological role, catalyzes the prenylation of para-hydroxybenzoate (PHB) with an all-trans polyprenyl group. Mediates the second step in the final reaction sequence of ubiquinone-8 (UQ-8) biosynthesis, which is the condensation of the polyisoprenoid side chain with PHB, generating the first membrane-bound Q intermediate 3-octaprenyl-4-hydroxybenzoate. The polypeptide is 4-hydroxybenzoate octaprenyltransferase (Saccharophagus degradans (strain 2-40 / ATCC 43961 / DSM 17024)).